A 265-amino-acid chain; its full sequence is Tryptophan synthase alpha chain (265 aa).

Residues Glu-49 and Glu-60 each act as proton acceptor in the active site.

It belongs to the TrpA family. As to quaternary structure, tetramer of two alpha and two beta chains.

It catalyses the reaction (1S,2R)-1-C-(indol-3-yl)glycerol 3-phosphate + L-serine = D-glyceraldehyde 3-phosphate + L-tryptophan + H2O. The protein operates within amino-acid biosynthesis; L-tryptophan biosynthesis; L-tryptophan from chorismate: step 5/5. Its function is as follows. The alpha subunit is responsible for the aldol cleavage of indoleglycerol phosphate to indole and glyceraldehyde 3-phosphate. In Herminiimonas arsenicoxydans, this protein is Tryptophan synthase alpha chain.